The chain runs to 420 residues: Glucose-1-phosphate adenylyltransferase (420 aa).

Residues Y107, G172, 187–188 (EK), and S205 contribute to the alpha-D-glucose 1-phosphate site.

Belongs to the bacterial/plant glucose-1-phosphate adenylyltransferase family. As to quaternary structure, homotetramer.

It catalyses the reaction alpha-D-glucose 1-phosphate + ATP + H(+) = ADP-alpha-D-glucose + diphosphate. It participates in glycan biosynthesis; glycogen biosynthesis. Its function is as follows. Involved in the biosynthesis of ADP-glucose, a building block required for the elongation reactions to produce glycogen. Catalyzes the reaction between ATP and alpha-D-glucose 1-phosphate (G1P) to produce pyrophosphate and ADP-Glc. This is Glucose-1-phosphate adenylyltransferase from Rhizobium etli (strain ATCC 51251 / DSM 11541 / JCM 21823 / NBRC 15573 / CFN 42).